The primary structure comprises 435 residues: 3-phosphoshikimate 1-carboxyvinyltransferase (435 aa).

Residues lysine 15, serine 16, and arginine 20 each coordinate 3-phosphoshikimate. Lysine 15 is a binding site for phosphoenolpyruvate. Glycine 96 and arginine 124 together coordinate phosphoenolpyruvate. 3-phosphoshikimate is bound by residues serine 169, glutamine 171, serine 195, aspartate 318, and lysine 345. Position 171 (glutamine 171) interacts with phosphoenolpyruvate. The active-site Proton acceptor is aspartate 318. Residues arginine 349 and arginine 393 each coordinate phosphoenolpyruvate.

The protein belongs to the EPSP synthase family. Monomer.

The protein localises to the cytoplasm. It carries out the reaction 3-phosphoshikimate + phosphoenolpyruvate = 5-O-(1-carboxyvinyl)-3-phosphoshikimate + phosphate. It functions in the pathway metabolic intermediate biosynthesis; chorismate biosynthesis; chorismate from D-erythrose 4-phosphate and phosphoenolpyruvate: step 6/7. Its function is as follows. Catalyzes the transfer of the enolpyruvyl moiety of phosphoenolpyruvate (PEP) to the 5-hydroxyl of shikimate-3-phosphate (S3P) to produce enolpyruvyl shikimate-3-phosphate and inorganic phosphate. This chain is 3-phosphoshikimate 1-carboxyvinyltransferase, found in Chlorobium chlorochromatii (strain CaD3).